A 187-amino-acid polypeptide reads, in one-letter code: Adenylate kinase (187 aa).

10 to 15 provides a ligand contact to ATP; that stretch reads GSGKGT. The segment at 30-59 is NMP; sequence STGDMLRAEIAAGTELGKQAKTVMDAGNLV. AMP-binding positions include threonine 31, arginine 36, 57–59, 85–88, and glutamine 92; these read NLV and GYPR. The interval 126 to 136 is LID; that stretch reads GRAKEQGRADD. An ATP-binding site is contributed by arginine 127. AMP contacts are provided by arginine 133 and arginine 144. Position 172 (glycine 172) interacts with ATP.

Belongs to the adenylate kinase family. In terms of assembly, monomer.

The protein localises to the cytoplasm. It carries out the reaction AMP + ATP = 2 ADP. It functions in the pathway purine metabolism; AMP biosynthesis via salvage pathway; AMP from ADP: step 1/1. Catalyzes the reversible transfer of the terminal phosphate group between ATP and AMP. Plays an important role in cellular energy homeostasis and in adenine nucleotide metabolism. This Stenotrophomonas maltophilia (strain K279a) protein is Adenylate kinase.